Reading from the N-terminus, the 1270-residue chain is Vigilin (1270 aa).

Over residues 1–11 (MSSVAVLTQES) the composition is skewed to polar residues. 2 disordered regions span residues 1–23 (MSSVAVLTQESFAEHRSGLTQQQ) and 28–47 (ALNSEEENDPPTYKEAFPPL). 11 KH domains span residues 150 to 188 (ASATVAIPKEHHRFVIGKNGEKLQDLELKTATKIQIPRP), 219 to 260 (DKRA…IPPP), 291 to 333 (KKKT…IPPT), 360 to 402 (ANSF…EFTE), 431 to 473 (INRT…IPPD), 504 to 545 (ENER…NFPD), 577 to 619 (VENS…LPGR), 651 to 693 (ANIT…FPTE), 724 to 766 (QTKS…FPTS), 798 to 840 (DNVV…LPTV), and 872 to 913 (EAQV…FPDR). The interval 911 to 947 (PDREENPAPVAEPALQENGEEGGEGKDGKDADPSSPR) is disordered. The span at 933–947 (GEGKDGKDADPSSPR) shows a compositional bias: basic and acidic residues. 3 KH domains span residues 970-1012 (ALVP…VPAP), 1051-1093 (ALRS…FPDK), and 1126-1168 (LEQM…FPQS). Residues 1217–1270 (SHEESKVPSKGFVVRDAPCGTVNNEKAPDMSSSEDFPSFGAQVAPKTLPWGPKR) form a disordered region.

The protein localises to the cytoplasm. The polypeptide is Vigilin (HDLBP) (Gallus gallus (Chicken)).